We begin with the raw amino-acid sequence, 347 residues long: Sensor protein VraS (347 aa).

A run of 2 helical transmembrane segments spans residues 13-33 (ILVYSMLAAFLFIDKVFVNII) and 43-63 (IFGIPVFLFLNLIIILLCIIV). The Histidine kinase domain occupies 150–341 (RLARELHDSV…RIEVKAPLNK (192 aa)). His156 carries the post-translational modification Phosphohistidine.

Post-translationally, autophosphorylated on His-156.

It localises to the cell membrane. It catalyses the reaction ATP + protein L-histidine = ADP + protein N-phospho-L-histidine.. Functionally, member of the two-component regulatory system PprA/PprB involved in biofilm formation by controlling the expression of many related genes including type IVb pili major subunit flp pilin, adhesin bapA or cupE fimbriae. Also modulates quorum-sensing signal production acting on both negative and positive modulators. Functions as a heme sensor histidine kinase which is autophosphorylated at a histidine residue and transfers its phosphate group to PprB. The polypeptide is Sensor protein VraS (vraS) (Staphylococcus aureus (strain COL)).